The primary structure comprises 129 residues: Small ribosomal subunit protein uS11c (129 aa).

The protein belongs to the universal ribosomal protein uS11 family. In terms of assembly, part of the 30S ribosomal subunit.

The protein resides in the plastid. It is found in the chloroplast. The polypeptide is Small ribosomal subunit protein uS11c (Gracilaria tenuistipitata var. liui (Red alga)).